A 362-amino-acid chain; its full sequence is Aminomethyltransferase (362 aa).

The protein belongs to the GcvT family. As to quaternary structure, the glycine cleavage system is composed of four proteins: P, T, L and H.

The catalysed reaction is N(6)-[(R)-S(8)-aminomethyldihydrolipoyl]-L-lysyl-[protein] + (6S)-5,6,7,8-tetrahydrofolate = N(6)-[(R)-dihydrolipoyl]-L-lysyl-[protein] + (6R)-5,10-methylene-5,6,7,8-tetrahydrofolate + NH4(+). Its function is as follows. The glycine cleavage system catalyzes the degradation of glycine. In Listeria monocytogenes serotype 4a (strain HCC23), this protein is Aminomethyltransferase.